A 288-amino-acid chain; its full sequence is Pantothenate synthetase (288 aa).

Residue 31–38 participates in ATP binding; it reads MGNLHRGH. His38 serves as the catalytic Proton donor. Gln62 is a (R)-pantoate binding site. Beta-alanine is bound at residue Gln62. 150-153 contacts ATP; the sequence is GQKD. Gln156 is a (R)-pantoate binding site. Residues Ile179 and 187–190 each bind ATP; that span reads LSSR.

Belongs to the pantothenate synthetase family. In terms of assembly, homodimer.

It is found in the cytoplasm. The enzyme catalyses (R)-pantoate + beta-alanine + ATP = (R)-pantothenate + AMP + diphosphate + H(+). It functions in the pathway cofactor biosynthesis; (R)-pantothenate biosynthesis; (R)-pantothenate from (R)-pantoate and beta-alanine: step 1/1. In terms of biological role, catalyzes the condensation of pantoate with beta-alanine in an ATP-dependent reaction via a pantoyl-adenylate intermediate. The chain is Pantothenate synthetase from Wigglesworthia glossinidia brevipalpis.